The following is a 150-amino-acid chain: Large ribosomal subunit protein bL9 (150 aa).

This sequence belongs to the bacterial ribosomal protein bL9 family.

Binds to the 23S rRNA. In Leptothrix cholodnii (strain ATCC 51168 / LMG 8142 / SP-6) (Leptothrix discophora (strain SP-6)), this protein is Large ribosomal subunit protein bL9.